The following is a 187-amino-acid chain: Adenine phosphoribosyltransferase 1 (187 aa).

At Ser68 the chain carries Phosphoserine. 133–137 (ATGGS) provides a ligand contact to AMP.

The protein belongs to the purine/pyrimidine phosphoribosyltransferase family. As to quaternary structure, homodimer. The cofactor is Mg(2+).

The protein resides in the cytoplasm. It is found in the nucleus. The enzyme catalyses AMP + diphosphate = 5-phospho-alpha-D-ribose 1-diphosphate + adenine. It functions in the pathway purine metabolism; AMP biosynthesis via salvage pathway; AMP from adenine: step 1/1. Functionally, catalyzes a salvage reaction resulting in the formation of AMP, that is energically less costly than de novo synthesis. The polypeptide is Adenine phosphoribosyltransferase 1 (Saccharomyces cerevisiae (strain ATCC 204508 / S288c) (Baker's yeast)).